A 310-amino-acid polypeptide reads, in one-letter code: GTP-binding protein GTR1 (310 aa).

Positions 15, 18, 19, 20, 21, 35, 41, 64, 126, 129, and 166 each coordinate GTP.

It belongs to the GTR/RAG GTP-binding protein family. Heterodimer; with GTR2. Component of the GSE complex composed of GTR1, GTR2, SLM4, MEH1 and LTV1. Interacts with GTR2; the interaction is direct. Interacts with TOR1.

It localises to the vacuole membrane. The catalysed reaction is GTP + H2O = GDP + phosphate + H(+). GTPase involved in activation of the TORC1 signaling pathway, which promotes growth and represses autophagy in nutrient-rich conditions. Also required for TORC1 inactivation during nitrogen starvation. Required for intracellular sorting of GAP1 out of the endosome. Functionally associated with the inorganic phosphate transporter PHO84, and may be involved in regulating its function or localization. In Saccharomyces cerevisiae (strain ATCC 204508 / S288c) (Baker's yeast), this protein is GTP-binding protein GTR1 (GTR1).